We begin with the raw amino-acid sequence, 269 residues long: Interleukin-1 beta (269 aa).

Residues 1-116 (MAEVPELASE…TWDNEAYVHD (116 aa)) constitute a propeptide, removed in mature form; by CASP1. The Involved in interaction with TMED10 C-terminus motif lies at 228–241 (FESAQFPNWYISTS).

It belongs to the IL-1 family. As to quaternary structure, monomer. In its precursor form, weakly interacts with full-length MEFV; the mature cytokine does not interact at all. Interacts with integrins ITGAV:ITGBV and ITGA5:ITGB1; integrin-binding is required for IL1B signaling. Interacts with cargo receptor TMED10; the interaction is direct and is required for the secretion of IL1B mature form. Interacts with HSP90AB1; the interaction facilitates cargo translocation into the ERGIC. Interacts with HSP90B1; the interaction facilitates cargo translocation into the ERGIC. Post-translationally, activation of the IL1B precursor involves a CASP1-catalyzed proteolytic cleavage. Processing and secretion are temporarily associated. (Microbial infection) Cleavage by S.pyogenes cysteine protease SpeB promotes its activation independently of CASP1. Expressed in activated monocytes/macrophages (at protein level).

It is found in the cytoplasm. It localises to the cytosol. The protein localises to the secreted. The protein resides in the lysosome. Its subcellular location is the extracellular exosome. Its activity is regulated as follows. (Microbial infection) Cleavage by S.pyogenes cysteine protease SpeB promotes its activation independently of CASP1. SpeB-mediated maturation of IL1B plays a dual role depending on infection site: while IL1B inflammatory response prevents bacterial growth during invasive skin infections, it promotes streptococcal infection of the nasopharynx by disrupting colonization resistance mediated by the microbiota. Its function is as follows. Potent pro-inflammatory cytokine. Initially discovered as the major endogenous pyrogen, induces prostaglandin synthesis, neutrophil influx and activation, T-cell activation and cytokine production, B-cell activation and antibody production, and fibroblast proliferation and collagen production. Promotes Th17 differentiation of T-cells. Synergizes with IL12/interleukin-12 to induce IFNG synthesis from T-helper 1 (Th1) cells. Plays a role in angiogenesis by inducing VEGF production synergistically with TNF and IL6. Involved in transduction of inflammation downstream of pyroptosis: its mature form is specifically released in the extracellular milieu by passing through the gasdermin-D (GSDMD) pore. Acts as a sensor of S.pyogenes infection in skin: cleaved and activated by pyogenes SpeB protease, leading to an inflammatory response that prevents bacterial growth during invasive skin infection. This chain is Interleukin-1 beta, found in Homo sapiens (Human).